The following is a 134-amino-acid chain: Large ribosomal subunit protein uL24 (134 aa).

It belongs to the universal ribosomal protein uL24 family. In terms of assembly, part of the 50S ribosomal subunit.

Its function is as follows. One of two assembly initiator proteins, it binds directly to the 5'-end of the 23S rRNA, where it nucleates assembly of the 50S subunit. In terms of biological role, located at the polypeptide exit tunnel on the outside of the subunit. In Sulfolobus acidocaldarius (strain ATCC 33909 / DSM 639 / JCM 8929 / NBRC 15157 / NCIMB 11770), this protein is Large ribosomal subunit protein uL24.